A 479-amino-acid polypeptide reads, in one-letter code: Glutamate--tRNA ligase (479 aa).

Residues 9 to 19 (PSPTGLFHIGT) carry the 'HIGH' region motif. The short motif at 248–252 (KLSKR) is the 'KMSKS' region element. K251 serves as a coordination point for ATP.

The protein belongs to the class-I aminoacyl-tRNA synthetase family. Glutamate--tRNA ligase type 1 subfamily. In terms of assembly, monomer.

It is found in the cytoplasm. It carries out the reaction tRNA(Glu) + L-glutamate + ATP = L-glutamyl-tRNA(Glu) + AMP + diphosphate. Catalyzes the attachment of glutamate to tRNA(Glu) in a two-step reaction: glutamate is first activated by ATP to form Glu-AMP and then transferred to the acceptor end of tRNA(Glu). This is Glutamate--tRNA ligase from Prochlorococcus marinus (strain MIT 9312).